Here is a 329-residue protein sequence, read N- to C-terminus: Putative methylthioribose-1-phosphate isomerase (329 aa).

Substrate contacts are provided by residues 50–52 (RGA), Arg-84, and Gln-182. Asp-223 (proton donor) is an active-site residue. 233 to 234 (NK) is a substrate binding site.

It belongs to the eIF-2B alpha/beta/delta subunits family. MtnA subfamily.

The enzyme catalyses 5-(methylsulfanyl)-alpha-D-ribose 1-phosphate = 5-(methylsulfanyl)-D-ribulose 1-phosphate. In terms of biological role, catalyzes the interconversion of methylthioribose-1-phosphate (MTR-1-P) into methylthioribulose-1-phosphate (MTRu-1-P). The polypeptide is Putative methylthioribose-1-phosphate isomerase (Methanocaldococcus jannaschii (strain ATCC 43067 / DSM 2661 / JAL-1 / JCM 10045 / NBRC 100440) (Methanococcus jannaschii)).